The following is a 457-amino-acid chain: ATP synthase subunit beta (457 aa).

An ATP-binding site is contributed by 147–154; it reads GGAGVGKT.

Belongs to the ATPase alpha/beta chains family. F-type ATPases have 2 components, CF(1) - the catalytic core - and CF(0) - the membrane proton channel. CF(1) has five subunits: alpha(3), beta(3), gamma(1), delta(1), epsilon(1). CF(0) has three main subunits: a(1), b(2) and c(9-12). The alpha and beta chains form an alternating ring which encloses part of the gamma chain. CF(1) is attached to CF(0) by a central stalk formed by the gamma and epsilon chains, while a peripheral stalk is formed by the delta and b chains.

The protein resides in the cell inner membrane. It carries out the reaction ATP + H2O + 4 H(+)(in) = ADP + phosphate + 5 H(+)(out). Functionally, produces ATP from ADP in the presence of a proton gradient across the membrane. The catalytic sites are hosted primarily by the beta subunits. This is ATP synthase subunit beta from Actinobacillus pleuropneumoniae serotype 5b (strain L20).